The primary structure comprises 181 residues: Large ribosomal subunit protein uL5 (181 aa).

This sequence belongs to the universal ribosomal protein uL5 family. Part of the 50S ribosomal subunit; part of the 5S rRNA/L5/L18/L25 subcomplex. Contacts the 5S rRNA and the P site tRNA. Forms a bridge to the 30S subunit in the 70S ribosome.

In terms of biological role, this is one of the proteins that bind and probably mediate the attachment of the 5S RNA into the large ribosomal subunit, where it forms part of the central protuberance. In the 70S ribosome it contacts protein S13 of the 30S subunit (bridge B1b), connecting the 2 subunits; this bridge is implicated in subunit movement. Contacts the P site tRNA; the 5S rRNA and some of its associated proteins might help stabilize positioning of ribosome-bound tRNAs. This is Large ribosomal subunit protein uL5 from Helicobacter acinonychis (strain Sheeba).